We begin with the raw amino-acid sequence, 235 residues long: Probable transcriptional regulatory protein CFF8240_0424 (235 aa).

It belongs to the TACO1 family.

The protein localises to the cytoplasm. This is Probable transcriptional regulatory protein CFF8240_0424 from Campylobacter fetus subsp. fetus (strain 82-40).